The chain runs to 293 residues: uncharacterized protein (293 aa).

Residues 1-60 (MHITLRQLEVFAEVLKSGSTTQASVMLALSQSAVSAALTDLEGQLGVQLFDRVGKRLVVN) form the HTH lysR-type domain. Positions 20 to 39 (TTQASVMLALSQSAVSAALT) form a DNA-binding region, H-T-H motif.

It belongs to the LysR transcriptional regulatory family.

This is an uncharacterized protein from Escherichia coli O157:H7.